The following is a 305-amino-acid chain: tRNA dimethylallyltransferase (305 aa).

14-21 (GPTASGKT) provides a ligand contact to ATP. 16 to 21 (TASGKT) contributes to the substrate binding site. Interaction with substrate tRNA regions lie at residues 39-42 (DSAL), 163-167 (QRIIR), and 243-248 (RCVGYR).

Belongs to the IPP transferase family. As to quaternary structure, monomer. Mg(2+) is required as a cofactor.

The enzyme catalyses adenosine(37) in tRNA + dimethylallyl diphosphate = N(6)-dimethylallyladenosine(37) in tRNA + diphosphate. Its function is as follows. Catalyzes the transfer of a dimethylallyl group onto the adenine at position 37 in tRNAs that read codons beginning with uridine, leading to the formation of N6-(dimethylallyl)adenosine (i(6)A). The sequence is that of tRNA dimethylallyltransferase from Vesicomyosocius okutanii subsp. Calyptogena okutanii (strain HA).